The primary structure comprises 718 residues: MFQMAKRAFLSTTLTLGLLAGSALPFLPASAVYADPDTAVTNKQSFSTDVIYQVFTDRFLDGNPSNNPTGAAYDATCSNLKLYCGGDWQGLINKINDNYFSDLGVTALWISQPVENIFATINYSGVTNTAYHGYWARDFKKTNPYFGTMADFQNLITTAHAKGIKIVIDFAPNHTSPAMETDTSFAENGRLYDNGTLVGGYTNDTNGYFHHNGGSDFSSLENGIYKNLYDLADFNHNNATIDKYFKDAIKLWLDMGVDGIRVDAVKHMPLGWQKSWMSSIYAHKPVFTFGEWFLGSAASDADNTDFANKSGMSLLDFRFNSAVRNVFRDNTSNMYALDSMINSTATDYNQVNDQVTFIDNHDMDRFKTSAVNNRRLEQALAFTLTSRGVPAIYYGTEQYLTGNGDPDNRAKMPSFSKSTTAFNVISKLAPLRKSNPAIAYGSTQQRWINNDVYVYERKFGKSVAVVAVNRNLSTSASITGLSTSLPTGSYTDVLGGVLNGNNITSTNGSINNFTLAAGATAVWQYTTAETTPTIGHVGPVMGKPGNVVTIDGRGFGSTKGTVYFGTTAVTGAAITSWEDTQIKVTIPSVAAGNYAVKVAASGVNSNAYNNFTILTGDQVTVRFVVNNASTTLGQNLYLTGNVAELGNWSTGSTAIGPAFNQVIHQYPTWYYDVSVPAGKQLEFKFFKKNGSTITWESGSNHTFTTPASGTATVTVNWQ.

The first 34 residues, 1 to 34 (MFQMAKRAFLSTTLTLGLLAGSALPFLPASAVYA), serve as a signal peptide directing secretion. Positions 35-172 (DPDTAVTNKQ…GIKIVIDFAP (138 aa)) are A1. Ca(2+)-binding residues include Asp-61, Asn-63, Asn-66, and Asn-67. Cys-77 and Cys-84 are joined by a disulfide. Ca(2+) contacts are provided by Gly-85 and Asp-87. 134 to 135 (YW) lines the substrate pocket. Residue Asn-173 coordinates Ca(2+). The interval 173 to 236 (NHTSPAMETD…NLYDLADFNH (64 aa)) is b. His-174 contacts substrate. Ile-224 is a Ca(2+) binding site. Substrate-binding positions include 227–230 (NLYD) and Asp-230. Asp-233 provides a ligand contact to Ca(2+). The tract at residues 237 to 440 (NNATIDKYFK…LRKSNPAIAY (204 aa)) is A2. Arg-261 contributes to the substrate binding site. Catalysis depends on Asp-263, which acts as the Nucleophile. Residues 266 to 267 (KH) and His-267 each bind substrate. Ca(2+) is bound at residue His-267. The active-site Proton donor is Glu-291. Substrate-binding residues include His-361, Asp-405, and Arg-409. The segment at 441–528 (GSTQQRWINN…ATAVWQYTTA (88 aa)) is c. The tract at residues 529–614 (ETTPTIGHVG…SNAYNNFTIL (86 aa)) is d. In terms of domain architecture, IPT/TIG spans 532-612 (PTIGHVGPVM…VNSNAYNNFT (81 aa)). The CBM20 domain occupies 613-718 (ILTGDQVTVR…GTATVTVNWQ (106 aa)). The segment at 615–718 (TGDQVTVRFV…GTATVTVNWQ (104 aa)) is e.

The protein belongs to the glycosyl hydrolase 13 family. Monomer. The cofactor is Ca(2+).

The protein resides in the secreted. It carries out the reaction Cyclizes part of a (1-&gt;4)-alpha-D-glucan chain by formation of a (1-&gt;4)-alpha-D-glucosidic bond.. The protein is Cyclomaltodextrin glucanotransferase of Niallia circulans (Bacillus circulans).